The primary structure comprises 915 residues: Transferrin-binding protein A (915 aa).

A signal peptide spans 1–24 (MQQQHLFRLNILCLSLMTALPAYA). The TonB box signature appears at 38-45 (DTIQVKAK). The TBDR plug domain occupies 51–176 (RDNEVTGLGK…LAGSVAFQTK (126 aa)). Residues 187-915 (QWGIQSKTAY…NYTFSLEMKF (729 aa)) form the TBDR beta-barrel domain. The span at 526 to 540 (LKTPPQNNGKKTSPN) shows a compositional bias: polar residues. The interval 526-545 (LKTPPQNNGKKTSPNGREKN) is disordered. The short motif at 898-915 (NRYAAPGRNYTFSLEMKF) is the TonB C-terminal box element.

The protein belongs to the TonB-dependent receptor family. As to quaternary structure, binds both human apo- and holo-transferrin (TF), via the TF C-terminus. Forms a large complex with TF and TbpB.

The protein resides in the cell outer membrane. Functionally, neisseria acquires iron by extracting it from serum transferrin (TF) in its human host. Acts as a TF receptor and is required for TF utilization. Binds both apo- and holo-TF, via the TF C-terminus. The chain is Transferrin-binding protein A from Neisseria gonorrhoeae.